Here is a 253-residue protein sequence, read N- to C-terminus: Ubiquinone/menaquinone biosynthesis C-methyltransferase UbiE (253 aa).

S-adenosyl-L-methionine is bound by residues T76, D97, 125-126, and S142; that span reads NA.

Belongs to the class I-like SAM-binding methyltransferase superfamily. MenG/UbiE family.

It carries out the reaction a 2-demethylmenaquinol + S-adenosyl-L-methionine = a menaquinol + S-adenosyl-L-homocysteine + H(+). The catalysed reaction is a 2-methoxy-6-(all-trans-polyprenyl)benzene-1,4-diol + S-adenosyl-L-methionine = a 5-methoxy-2-methyl-3-(all-trans-polyprenyl)benzene-1,4-diol + S-adenosyl-L-homocysteine + H(+). It functions in the pathway quinol/quinone metabolism; menaquinone biosynthesis; menaquinol from 1,4-dihydroxy-2-naphthoate: step 2/2. The protein operates within cofactor biosynthesis; ubiquinone biosynthesis. Methyltransferase required for the conversion of demethylmenaquinol (DMKH2) to menaquinol (MKH2) and the conversion of 2-polyprenyl-6-methoxy-1,4-benzoquinol (DDMQH2) to 2-polyprenyl-3-methyl-6-methoxy-1,4-benzoquinol (DMQH2). This is Ubiquinone/menaquinone biosynthesis C-methyltransferase UbiE from Xanthomonas axonopodis pv. citri (strain 306).